Here is a 136-residue protein sequence, read N- to C-terminus: Cytochrome c-550 (136 aa).

A signal peptide spans 1-28 (MTKLTFGALVALAMTAAASTAMSSKAMA). Residues C41, C44, H45, and M107 each coordinate heme c.

Binds 1 heme c group covalently per subunit. In terms of processing, the N-terminus is blocked.

It is found in the periplasm. Its function is as follows. Plays a role in bacteroid respiration under conditions of oxygen limitation. Required for electron-transfer during denitrification. The protein is Cytochrome c-550 (cycA) of Bradyrhizobium diazoefficiens (strain JCM 10833 / BCRC 13528 / IAM 13628 / NBRC 14792 / USDA 110).